A 235-amino-acid chain; its full sequence is Small ribosomal subunit protein uS2 (235 aa).

Belongs to the universal ribosomal protein uS2 family.

The protein is Small ribosomal subunit protein uS2 of Thermoanaerobacter pseudethanolicus (strain ATCC 33223 / 39E) (Clostridium thermohydrosulfuricum).